The following is a 247-amino-acid chain: 23S rRNA (guanosine-2'-O-)-methyltransferase RlmB (247 aa).

S-adenosyl-L-methionine is bound by residues G197, I217, and L226.

This sequence belongs to the class IV-like SAM-binding methyltransferase superfamily. RNA methyltransferase TrmH family. RlmB subfamily.

The protein localises to the cytoplasm. The catalysed reaction is guanosine(2251) in 23S rRNA + S-adenosyl-L-methionine = 2'-O-methylguanosine(2251) in 23S rRNA + S-adenosyl-L-homocysteine + H(+). Functionally, specifically methylates the ribose of guanosine 2251 in 23S rRNA. This chain is 23S rRNA (guanosine-2'-O-)-methyltransferase RlmB, found in Burkholderia sp.